The sequence spans 334 residues: MAITVGINGFGRIGRLVLRIALSRKDIQIVAINDPFIAPEYASYMFKYDSTHGRYSGEVSHEGENIVIDGKKIRVYQERDPVNIPWGKDGVDYVIDSTGVFKELDSAQKHIDAGAKKVVITAPSSTAPMFVVGVNEDKYTPDLNIISNASCTTNCLAPLAKIINNKFGIEEGLMTTVHSITATQKTVDGPSHKDWRGGRTASGNIIPSSTGAAKAVGKVIPELAGKLTGMSLRVPTVDVSVVDLTVKLLKDATYDEIKAAVKEAAEGPLKGVVGYTEDQVVSSDFLTDNRSSIFDAEAGIWLSPRFVKLIAWYDNEYGYSTRVVDLLEYVASKN.

Residues 12–13 (RI), Asp-34, and Arg-79 contribute to the NAD(+) site. Residues 150–152 (SCT), Thr-181, 210–211 (TG), and Arg-233 each bind D-glyceraldehyde 3-phosphate. The Nucleophile role is filled by Cys-151. Asn-315 contributes to the NAD(+) binding site.

The protein belongs to the glyceraldehyde-3-phosphate dehydrogenase family. As to quaternary structure, homotetramer.

The protein localises to the cytoplasm. The catalysed reaction is D-glyceraldehyde 3-phosphate + phosphate + NAD(+) = (2R)-3-phospho-glyceroyl phosphate + NADH + H(+). Its pathway is carbohydrate degradation; glycolysis; pyruvate from D-glyceraldehyde 3-phosphate: step 1/5. In Wickerhamomyces ciferrii (strain ATCC 14091 / BCRC 22168 / CBS 111 / JCM 3599 / NBRC 0793 / NRRL Y-1031 F-60-10) (Yeast), this protein is Glyceraldehyde-3-phosphate dehydrogenase (GPD).